Consider the following 251-residue polypeptide: Probable transcriptional regulatory protein BLA_1344 (251 aa).

It belongs to the TACO1 family.

It is found in the cytoplasm. The sequence is that of Probable transcriptional regulatory protein BLA_1344 from Bifidobacterium animalis subsp. lactis (strain AD011).